A 432-amino-acid polypeptide reads, in one-letter code: 3-phosphoshikimate 1-carboxyvinyltransferase (432 aa).

3-phosphoshikimate contacts are provided by K23, S24, and R28. K23 provides a ligand contact to phosphoenolpyruvate. Positions 95 and 123 each coordinate phosphoenolpyruvate. Residues S167, Q169, D317, and K344 each coordinate 3-phosphoshikimate. Q169 contributes to the phosphoenolpyruvate binding site. D317 acts as the Proton acceptor in catalysis. Phosphoenolpyruvate contacts are provided by R348 and R390.

This sequence belongs to the EPSP synthase family. As to quaternary structure, monomer.

The protein localises to the cytoplasm. It carries out the reaction 3-phosphoshikimate + phosphoenolpyruvate = 5-O-(1-carboxyvinyl)-3-phosphoshikimate + phosphate. It functions in the pathway metabolic intermediate biosynthesis; chorismate biosynthesis; chorismate from D-erythrose 4-phosphate and phosphoenolpyruvate: step 6/7. Catalyzes the transfer of the enolpyruvyl moiety of phosphoenolpyruvate (PEP) to the 5-hydroxyl of shikimate-3-phosphate (S3P) to produce enolpyruvyl shikimate-3-phosphate and inorganic phosphate. In Staphylococcus haemolyticus (strain JCSC1435), this protein is 3-phosphoshikimate 1-carboxyvinyltransferase.